Consider the following 901-residue polypeptide: MTTQLNINSVIENAKRVITPLSPISIFAARNPWEGLEADTFEDVAKWLRDVRDVDIFPNKALIESAVARGELDESVFNQLVTDMLLEHHYNIPQHYINLYIDNIKTLKDVPASYMNHSNVDVVADLLLEKSKRDMAESYHHYDVRPMSDAIIDEQGEPLSEQVNRQMIKWTKLYIDQFLSSWTMPKREQSFYHAWLHLAQHDHSFTKAQRQVIKGLPNDPEMTIESVLTHFSIDQEDYQAYVEGHLLALPGWAGMLYYRSQQHHFEQHLLTDYLAIRLVVEQLLVGDEFKSVAKDCESRSENWFKQTVASWCYYSDMPSDVLLQHDVNEIQTFIHFAATMNKNVFKNLWLIAWEMTYESQLKQKIKAGHESVAGALDVNQVNVSENDNANQPHSVLLNDTQAVDENNSELNQMGTSTKAQIAFCIDVRSEPFRRHIEAAGPFETIGIAGFFGLPIQKDAVDEQFKHDSLPVMVPPAYRIKEFADRYDMNVYRQQQQTMSSMFYTFKLMKNNVMPSLLLPELSGPFLSLSTIVNSIMPRKSRASLQKIKQKWLKKPETKLTIDREFDRTSDLPVGFTEQEQIDFALQALKLMDLTEAFAPFVVLAGHASHSHNNPHHASLECGACGGASSGFNAKLLAMICNRPNVRQGLKQSGVYIPETTVFAVAEHHTSTDTLAWVYVPDTLSSIALDAYESLNDAMPMISEHANRERLDKLPTIGRVNHPVEEAQRFASDWSEVRPEWGLAKNASFIIGRRQLTKGIDLEGRTFLHNYDWRKDKDGTLLNTIISGPALVAQWINLQYYASTVAPHFYGSGNKATQTVTSGVGVMQGNASDLMYGLSWQSVMAADRTMYHSPIRLLVVIQAPDYVVARLLANNEHFARKVSNHWLRLMSVNEEGRFKSWI.

Zn(2+) is bound by residues cysteine 424, aspartate 426, histidine 606, and cysteine 621.

It belongs to the inorganic carbon transporter (TC 9.A.2) DabA family. In terms of assembly, forms a complex with DabB. Requires Zn(2+) as cofactor.

Its subcellular location is the cell membrane. Part of an energy-coupled inorganic carbon pump. The chain is Probable inorganic carbon transporter subunit DabA from Staphylococcus aureus (strain NCTC 8325 / PS 47).